The chain runs to 203 residues: Acid phosphatase (203 aa).

Histidine 13 serves as the catalytic Tele-phosphohistidine intermediate. Catalysis depends on glutamate 85, which acts as the Proton donor/acceptor.

It belongs to the phosphoglycerate mutase family. In terms of assembly, homodimer.

It carries out the reaction a phosphate monoester + H2O = an alcohol + phosphate. The enzyme catalyses beta-D-fructose 1,6-bisphosphate + H2O = beta-D-fructose 6-phosphate + phosphate. It participates in carbohydrate biosynthesis; gluconeogenesis. In contrast to classical FBPases, is resistant to inhibition by lithium. Phosphatase with a broad specificity. Can dephosphorylate a variety of substrates including phosphorylated sugars like fructose-6-phosphate (F6P). Is able to function in vivo as a fructose-1,6-bisphosphatase (FBPase) and to maintain gluconeogenesis when the classical FBPase GlpX is absent. Shows negligible phosphoglycerate mutase activity. Has no phosphatase activity against 3-phosphoglycerate, 2,3-bisphosphoglycerate, or hydrophobic substrates such as alpha-napthyl phosphate. The sequence is that of Acid phosphatase from Mycobacterium tuberculosis (strain ATCC 25618 / H37Rv).